A 192-amino-acid chain; its full sequence is Holliday junction branch migration complex subunit RuvA (192 aa).

Residues Met-1–Leu-61 form a domain I region. Residues Ser-62 to Thr-137 are domain II. The interval Thr-137–Ala-140 is flexible linker. Residues Asp-141–Lys-192 form a domain III region.

This sequence belongs to the RuvA family. Homotetramer. Forms an RuvA(8)-RuvB(12)-Holliday junction (HJ) complex. HJ DNA is sandwiched between 2 RuvA tetramers; dsDNA enters through RuvA and exits via RuvB. An RuvB hexamer assembles on each DNA strand where it exits the tetramer. Each RuvB hexamer is contacted by two RuvA subunits (via domain III) on 2 adjacent RuvB subunits; this complex drives branch migration. In the full resolvosome a probable DNA-RuvA(4)-RuvB(12)-RuvC(2) complex forms which resolves the HJ.

The protein resides in the cytoplasm. The RuvA-RuvB-RuvC complex processes Holliday junction (HJ) DNA during genetic recombination and DNA repair, while the RuvA-RuvB complex plays an important role in the rescue of blocked DNA replication forks via replication fork reversal (RFR). RuvA specifically binds to HJ cruciform DNA, conferring on it an open structure. The RuvB hexamer acts as an ATP-dependent pump, pulling dsDNA into and through the RuvAB complex. HJ branch migration allows RuvC to scan DNA until it finds its consensus sequence, where it cleaves and resolves the cruciform DNA. This Lactobacillus johnsonii (strain CNCM I-12250 / La1 / NCC 533) protein is Holliday junction branch migration complex subunit RuvA.